The primary structure comprises 328 residues: Nuclear transcription factor Y subunit A-8 (328 aa).

Positions 54 to 86 (KNISFQDQDSSSTLSSAQSSNDVTSSGDDNPSR) are disordered. Positions 57–75 (SFQDQDSSSTLSSAQSSND) are enriched in low complexity. The span at 76 to 86 (VTSSGDDNPSR) shows a compositional bias: polar residues. Residues 175–198 (FVNAKQFHAIMRRRQQRAKLEAQN) carry the Subunit association domain (SAD) motif. Residues 205–230 (KPYLHESRHVHALKRPRGSGGRFLNT) constitute a DNA-binding region (NFYA/HAP2-type).

It belongs to the NFYA/HAP2 subunit family. As to quaternary structure, heterotrimeric transcription factor composed of three components, NF-YA, NF-YB and NF-YC. NF-YB and NF-YC must interact and dimerize for NF-YA association and DNA binding. As to expression, expressed in the whole plant, except roots.

It localises to the nucleus. Functionally, stimulates the transcription of various genes by recognizing and binding to a CCAAT motif in promoters. The polypeptide is Nuclear transcription factor Y subunit A-8 (NFYA8) (Arabidopsis thaliana (Mouse-ear cress)).